We begin with the raw amino-acid sequence, 112 residues long: uncharacterized protein (112 aa).

Residues Asn-29 and Asn-60 are each glycosylated (N-linked (GlcNAc...) asparagine; by host). The helical transmembrane segment at Ile-66–Leu-86 threads the bilayer.

It belongs to the asfivirus B117L family.

The protein localises to the host membrane. It localises to the virion. This is an uncharacterized protein from Ornithodoros (relapsing fever ticks).